The chain runs to 165 residues: Large ribosomal subunit protein uL30 (165 aa).

It belongs to the universal ribosomal protein uL30 family. Part of the 50S ribosomal subunit.

The sequence is that of Large ribosomal subunit protein uL30 from Thermoplasma volcanium (strain ATCC 51530 / DSM 4299 / JCM 9571 / NBRC 15438 / GSS1).